The following is a 216-amino-acid chain: MNNLNYFTKISASCAALALMTLAGCASHKPIDYAPTQVESANQAEAWELQGKLAVRTPEDKFSTNLYWFHTQTNDDLTLTTMLGTTVMTLNKTPSQASLQIEDKVYQDSDAEELLRRLTGWSIPVDTLPLWITGQVSAQDEVVAVDEQGRPKEVLNHTGSSPWHVSFNSWQEQSGAELPRLLQLERDDIRLKLQVSQWQALTPKRASQPESTDDKQ.

Residues 1 to 24 (MNNLNYFTKISASCAALALMTLAG) form the signal peptide. C25 carries N-palmitoyl cysteine lipidation. C25 carries the S-diacylglycerol cysteine lipid modification.

The protein belongs to the LolB family. As to quaternary structure, monomer.

The protein localises to the cell outer membrane. Plays a critical role in the incorporation of lipoproteins in the outer membrane after they are released by the LolA protein. The chain is Outer-membrane lipoprotein LolB from Shewanella loihica (strain ATCC BAA-1088 / PV-4).